Reading from the N-terminus, the 315-residue chain is Methionyl-tRNA formyltransferase (315 aa).

114-117 (SLLP) contributes to the (6S)-5,6,7,8-tetrahydrofolate binding site.

It belongs to the Fmt family.

The enzyme catalyses L-methionyl-tRNA(fMet) + (6R)-10-formyltetrahydrofolate = N-formyl-L-methionyl-tRNA(fMet) + (6S)-5,6,7,8-tetrahydrofolate + H(+). Functionally, attaches a formyl group to the free amino group of methionyl-tRNA(fMet). The formyl group appears to play a dual role in the initiator identity of N-formylmethionyl-tRNA by promoting its recognition by IF2 and preventing the misappropriation of this tRNA by the elongation apparatus. The chain is Methionyl-tRNA formyltransferase from Corynebacterium glutamicum (strain R).